A 570-amino-acid polypeptide reads, in one-letter code: Urease subunit alpha (570 aa).

A Urease domain is found at 131 to 570 (GGMDSHIHFI…LPMAQRYFLF (440 aa)). Ni(2+) is bound by residues His136, His138, and Lys219. N6-carboxylysine is present on Lys219. Position 221 (His221) interacts with substrate. Positions 248 and 274 each coordinate Ni(2+). Residue His322 is the Proton donor of the active site. Asp362 lines the Ni(2+) pocket.

The protein belongs to the metallo-dependent hydrolases superfamily. Urease alpha subunit family. Heterotrimer of UreA (gamma), UreB (beta) and UreC (alpha) subunits. Three heterotrimers associate to form the active enzyme. Ni cation is required as a cofactor. Post-translationally, carboxylation allows a single lysine to coordinate two nickel ions.

It localises to the cytoplasm. It catalyses the reaction urea + 2 H2O + H(+) = hydrogencarbonate + 2 NH4(+). The protein operates within nitrogen metabolism; urea degradation; CO(2) and NH(3) from urea (urease route): step 1/1. The protein is Urease subunit alpha of Rhizobium leguminosarum bv. trifolii (strain WSM2304).